A 621-amino-acid chain; its full sequence is Microbial serine proteinase (621 aa).

Residues 1-24 form the signal peptide; it reads MRKTSLALAISALLSALPIASVQA. In terms of domain architecture, Peptidase S8 spans 68-440; that stretch reads PRGGMAGNDL…FGLVDVNKTQ (373 aa). The Charge relay system role is filled by Asp-98. A disordered region spans residues 114-133; the sequence is PGSKNVVTGGSDPTPTDPDR. Residues His-137 and Ser-354 each act as charge relay system in the active site. The 166-residue stretch at 454 to 619 folds into the P/Homo B domain; that stretch reads AVALAKGKGN…GYSVLGHDAA (166 aa). The interval 457-485 is disordered; it reads LAKGKGNGRSPSAPSRYVGSSPTRSSTQV. Over residues 465–485 the composition is skewed to polar residues; the sequence is RSPSAPSRYVGSSPTRSSTQV.

Belongs to the peptidase S8 family.

Agent of furonculosis. This chain is Microbial serine proteinase (aspA), found in Aeromonas salmonicida.